A 150-amino-acid polypeptide reads, in one-letter code: Non-specific lipid transfer protein GPI-anchored 7 (150 aa).

An N-terminal signal peptide occupies residues 1-25; that stretch reads MTKTMMIFAAAMTVMALLLVPTIEA. Intrachain disulfides connect Cys29-Cys66, Cys36-Cys50, Cys51-Cys92, and Cys64-Cys101. Residues Asn41, Asn79, and Asn93 are each glycosylated (N-linked (GlcNAc...) asparagine). Positions 103 to 125 are disordered; it reads AKGAPSPKASLPPPAPAGNTKKD. The GPI-anchor amidated aspartate moiety is linked to residue Asp125. Positions 126-150 are cleaved as a propeptide — removed in mature form; that stretch reads AGAGNKLAGYGVTTVILSLISSIFF.

The protein belongs to the plant LTP family. Up-regulated in the epidermis of stems.

The protein localises to the cell membrane. Its function is as follows. Probable lipid transfer protein. This Arabidopsis thaliana (Mouse-ear cress) protein is Non-specific lipid transfer protein GPI-anchored 7.